The following is a 444-amino-acid chain: Tubulin beta-2 chain (444 aa).

Residues Q11, E69, S138, G142, T143, G144, N204, and N226 each coordinate GTP. Residue E69 participates in Mg(2+) binding.

It belongs to the tubulin family. In terms of assembly, dimer of alpha and beta chains. A typical microtubule is a hollow water-filled tube with an outer diameter of 25 nm and an inner diameter of 15 nM. Alpha-beta heterodimers associate head-to-tail to form protofilaments running lengthwise along the microtubule wall with the beta-tubulin subunit facing the microtubule plus end conferring a structural polarity. Microtubules usually have 13 protofilaments but different protofilament numbers can be found in some organisms and specialized cells. Mg(2+) is required as a cofactor.

It localises to the cytoplasm. The protein resides in the cytoskeleton. Tubulin is the major constituent of microtubules, a cylinder consisting of laterally associated linear protofilaments composed of alpha- and beta-tubulin heterodimers. Microtubules grow by the addition of GTP-tubulin dimers to the microtubule end, where a stabilizing cap forms. Below the cap, tubulin dimers are in GDP-bound state, owing to GTPase activity of alpha-tubulin. The protein is Tubulin beta-2 chain (TUBB2) of Zea mays (Maize).